A 91-amino-acid chain; its full sequence is Large ribosomal subunit protein uL23 (91 aa).

Belongs to the universal ribosomal protein uL23 family. In terms of assembly, part of the 50S ribosomal subunit. Contacts protein L29, and trigger factor when it is bound to the ribosome.

In terms of biological role, one of the early assembly proteins it binds 23S rRNA. One of the proteins that surrounds the polypeptide exit tunnel on the outside of the ribosome. Forms the main docking site for trigger factor binding to the ribosome. This Staphylococcus epidermidis (strain ATCC 35984 / DSM 28319 / BCRC 17069 / CCUG 31568 / BM 3577 / RP62A) protein is Large ribosomal subunit protein uL23.